The following is a 741-amino-acid chain: Phosphoribosylformylglycinamidine synthase subunit PurL (741 aa).

His-53 is an active-site residue. Residues Tyr-56 and Lys-95 each contribute to the ATP site. Glu-97 is a Mg(2+) binding site. Residues 98–101 and Arg-120 each bind substrate; that span reads SHNH. His-99 serves as the catalytic Proton acceptor. Asp-121 provides a ligand contact to Mg(2+). Gln-244 lines the substrate pocket. Asp-274 is a binding site for Mg(2+). Residue 318–320 participates in substrate binding; it reads ESQ. Residues Asp-501 and Gly-538 each contribute to the ATP site. Mg(2+) is bound at residue Asn-539. Ser-541 provides a ligand contact to substrate.

This sequence belongs to the FGAMS family. Monomer. Part of the FGAM synthase complex composed of 1 PurL, 1 PurQ and 2 PurS subunits.

It localises to the cytoplasm. It carries out the reaction N(2)-formyl-N(1)-(5-phospho-beta-D-ribosyl)glycinamide + L-glutamine + ATP + H2O = 2-formamido-N(1)-(5-O-phospho-beta-D-ribosyl)acetamidine + L-glutamate + ADP + phosphate + H(+). Its pathway is purine metabolism; IMP biosynthesis via de novo pathway; 5-amino-1-(5-phospho-D-ribosyl)imidazole from N(2)-formyl-N(1)-(5-phospho-D-ribosyl)glycinamide: step 1/2. Functionally, part of the phosphoribosylformylglycinamidine synthase complex involved in the purines biosynthetic pathway. Catalyzes the ATP-dependent conversion of formylglycinamide ribonucleotide (FGAR) and glutamine to yield formylglycinamidine ribonucleotide (FGAM) and glutamate. The FGAM synthase complex is composed of three subunits. PurQ produces an ammonia molecule by converting glutamine to glutamate. PurL transfers the ammonia molecule to FGAR to form FGAM in an ATP-dependent manner. PurS interacts with PurQ and PurL and is thought to assist in the transfer of the ammonia molecule from PurQ to PurL. The polypeptide is Phosphoribosylformylglycinamidine synthase subunit PurL (Limosilactobacillus fermentum (strain NBRC 3956 / LMG 18251) (Lactobacillus fermentum)).